The primary structure comprises 508 residues: Photosystem II CP47 reaction center protein (508 aa).

Transmembrane regions (helical) follow at residues 21–36 (SVHIMHTALVSGWAGS), 101–115 (IMLSGLCFLAAIWHW), 140–156 (GIHLFLAGVACFGFGAF), 203–218 (IAAGTLGILAGLFHLS), 237–252 (VLSSSIAAVFFAAFVV), and 457–472 (SFALLFFFGHIWHGAR).

Belongs to the PsbB/PsbC family. PsbB subfamily. PSII is composed of 1 copy each of membrane proteins PsbA, PsbB, PsbC, PsbD, PsbE, PsbF, PsbH, PsbI, PsbJ, PsbK, PsbL, PsbM, PsbT, PsbX, PsbY, PsbZ, Psb30/Ycf12, at least 3 peripheral proteins of the oxygen-evolving complex and a large number of cofactors. It forms dimeric complexes. It depends on Binds multiple chlorophylls. PSII binds additional chlorophylls, carotenoids and specific lipids. as a cofactor.

The protein resides in the plastid. Its subcellular location is the chloroplast thylakoid membrane. Functionally, one of the components of the core complex of photosystem II (PSII). It binds chlorophyll and helps catalyze the primary light-induced photochemical processes of PSII. PSII is a light-driven water:plastoquinone oxidoreductase, using light energy to abstract electrons from H(2)O, generating O(2) and a proton gradient subsequently used for ATP formation. This is Photosystem II CP47 reaction center protein from Piper cenocladum (Ant piper).